A 438-amino-acid chain; its full sequence is GDP-mannose 6-dehydrogenase (438 aa).

Residues Y10, V11, D30, K35, T86, and T124 each coordinate NAD(+). Residues E161, K210, N214, H217, N225, Y256, Y257, R259, F262, and G265 each coordinate GDP-alpha-D-mannuronate. C268 is a catalytic residue. An NAD(+)-binding site is contributed by K271. GDP-alpha-D-mannuronate is bound at residue K324. Residue R331 coordinates NAD(+).

This sequence belongs to the UDP-glucose/GDP-mannose dehydrogenase family.

The catalysed reaction is GDP-alpha-D-mannose + 2 NAD(+) + H2O = GDP-alpha-D-mannuronate + 2 NADH + 3 H(+). It participates in glycan biosynthesis; alginate biosynthesis. Catalyzes the oxidation of guanosine diphospho-D-mannose (GDP-D-mannose) to GDP-D-mannuronic acid, a precursor for alginate polymerization. The alginate layer causes a mucoid phenotype and provides a protective barrier against host immune defenses and antibiotics. The chain is GDP-mannose 6-dehydrogenase (algD) from Pseudomonas savastanoi pv. phaseolicola (Pseudomonas syringae pv. phaseolicola).